The following is a 382-amino-acid chain: Proton extrusion protein PxcA (382 aa).

A run of 4 helical transmembrane segments spans residues 156–176 (TLISLKIILLLILVPLLVQQI), 257–277 (AIKNVLADLAALIAFAFVCII), 305–325 (IILFTDMFVGFHSPEGWQVLL), and 340–360 (FILLFIATFPVILATIFKYWI).

This sequence belongs to the CemA family.

Its subcellular location is the cell inner membrane. In terms of biological role, required for H(+) efflux immediately after light irradiation to form a rapid H(+) concentration gradient across the thylakoid membranes. Together with PxcL, contributes to transient H(+) uptake following dark to light transition. This is Proton extrusion protein PxcA from Prochlorococcus marinus (strain MIT 9313).